The primary structure comprises 189 residues: Elongation factor P (189 aa).

Lys-34 bears the N6-(3,6-diaminohexanoyl)-5-hydroxylysine mark.

Belongs to the elongation factor P family. May be beta-lysylated on the epsilon-amino group of Lys-34 by the combined action of EpmA and EpmB, and then hydroxylated on the C5 position of the same residue by EpmC (if this protein is present). Lysylation is critical for the stimulatory effect of EF-P on peptide-bond formation. The lysylation moiety may extend toward the peptidyltransferase center and stabilize the terminal 3-CCA end of the tRNA. Hydroxylation of the C5 position on Lys-34 may allow additional potential stabilizing hydrogen-bond interactions with the P-tRNA.

The protein resides in the cytoplasm. The protein operates within protein biosynthesis; polypeptide chain elongation. In terms of biological role, involved in peptide bond synthesis. Alleviates ribosome stalling that occurs when 3 or more consecutive Pro residues or the sequence PPG is present in a protein, possibly by augmenting the peptidyl transferase activity of the ribosome. Modification of Lys-34 is required for alleviation. This is Elongation factor P from Buchnera aphidicola subsp. Baizongia pistaciae (strain Bp).